The primary structure comprises 478 residues: Muscarinic acetylcholine receptor M4 (478 aa).

The Extracellular portion of the chain corresponds to 1 to 30; that stretch reads MXNFTPVNGSSANQSVRLVTAAHNHLETVE. N-linked (GlcNAc...) asparagine glycans are attached at residues asparagine 8 and asparagine 13. Residues 31–53 traverse the membrane as a helical segment; sequence MVFIATVTGSLSLVTVVGNILVM. The Cytoplasmic segment spans residues 54 to 67; sequence LSIKVNRQLQTVNN. A helical transmembrane segment spans residues 68 to 88; the sequence is YFLFSLGCADLIIGAFSMNLY. Residues 89-105 lie on the Extracellular side of the membrane; the sequence is TLYIIKGYWPLGAVVCD. A disulfide bond links cysteine 104 and cysteine 184. The chain crosses the membrane as a helical span at residues 106–127; the sequence is LWLALDYVVSNASVMNLLIISF. The Cytoplasmic portion of the chain corresponds to 128 to 147; the sequence is DRYFCVTKPLTYPARRTTKM. The chain crosses the membrane as a helical span at residues 148–170; the sequence is AGLMIAAAWVLSFVLWAPAILFW. At 171–192 the chain is on the extracellular side; it reads QFVVGKRTVPDNQCFIQFLSNP. Residues 193–215 form a helical membrane-spanning segment; that stretch reads AVTFGTAIAAFYLPVVIMTVLYI. Over 216–400 the chain is Cytoplasmic; that stretch reads HISLASRSRV…AARERKVTRT (185 aa). Residues 271–333 are disordered; sequence LEEAPPPALP…APTLQPRTLN (63 aa). Residues 274-285 show a composition bias toward pro residues; the sequence is APPPALPPPPRP. The segment covering 293–303 has biased composition (polar residues); it reads NESSSGSATQN. The span at 310-332 shows a compositional bias: low complexity; the sequence is TELSTAEATTPALPAPTLQPRTL. The helical transmembrane segment at 401-421 threads the bilayer; sequence IFAILLAFILTWTPYNVMVLV. The Extracellular segment spans residues 422 to 435; the sequence is NTFCQSCIPERVWS. The chain crosses the membrane as a helical span at residues 436–455; sequence IGYWLCYVNSTINPACYALC. Residues 456–478 lie on the Cytoplasmic side of the membrane; the sequence is NATFKKTFRHLLLCQYRNIGTAR. Residues threonine 458, threonine 462, and threonine 476 each carry the phosphothreonine modification.

The protein belongs to the G-protein coupled receptor 1 family. Muscarinic acetylcholine receptor subfamily. CHRM4 sub-subfamily.

The protein localises to the cell membrane. It localises to the postsynaptic cell membrane. Its function is as follows. The muscarinic acetylcholine receptor mediates various cellular responses, including inhibition of adenylate cyclase, breakdown of phosphoinositides and modulation of potassium channels through the action of G proteins. Primary transducing effect is inhibition of adenylate cyclase. The chain is Muscarinic acetylcholine receptor M4 (Chrm4) from Rattus norvegicus (Rat).